Consider the following 588-residue polypeptide: Phosphoinositide phosphatase SAC8 (588 aa).

Positions 37-56 (FSVNRRDGNIKPLDENASSG) are disordered. The segment covering 40–50 (NRRDGNIKPLD) has biased composition (basic and acidic residues). In terms of domain architecture, SAC spans 129–455 (LQALETTPGL…GDEVSLQYAG (327 aa)). Positions 390 to 401 (RSNCIDCLDRTN) match the Phosphatase catalytic core motif. A run of 2 helical transmembrane segments spans residues 524–544 (SFLP…SFTI) and 555–575 (LASA…KANG).

Ubiquitous with a higher level of expression in young seedlings than in other tissues.

It localises to the endoplasmic reticulum membrane. Phosphoinositide phosphatase that hydrolyzes PtdIns(3)P and PtdIns(4)P. The polypeptide is Phosphoinositide phosphatase SAC8 (SAC8) (Arabidopsis thaliana (Mouse-ear cress)).